The primary structure comprises 537 residues: Glutamyl-tRNA(Gln) amidotransferase subunit A, chloroplastic/mitochondrial (537 aa).

Catalysis depends on charge relay system residues Lys-116 and Ser-191. The Acyl-ester intermediate role is filled by Ser-215.

Belongs to the amidase family. GatA subfamily. As to quaternary structure, subunit of the heterotrimeric GatCAB amidotransferase (AdT) complex, composed of A, B and C subunits.

It localises to the mitochondrion. It is found in the plastid. The protein resides in the chloroplast stroma. The enzyme catalyses L-glutamyl-tRNA(Gln) + L-glutamine + ATP + H2O = L-glutaminyl-tRNA(Gln) + L-glutamate + ADP + phosphate + H(+). Allows the formation of correctly charged Gln-tRNA(Gln) through the transamidation of misacylated Glu-tRNA(Gln) in chloroplasts and mitochondria. The reaction takes place in the presence of glutamine and ATP through an activated gamma-phospho-Glu-tRNA(Gln). The chain is Glutamyl-tRNA(Gln) amidotransferase subunit A, chloroplastic/mitochondrial from Arabidopsis thaliana (Mouse-ear cress).